We begin with the raw amino-acid sequence, 172 residues long: Translationally-controlled tumor protein homolog (172 aa).

The TCTP domain maps to 1–172 (MIIYKDCITE…FKDGLIIEKC (172 aa)).

It belongs to the TCTP family.

The protein localises to the cytoplasm. Functionally, involved in calcium binding and microtubule stabilization. This chain is Translationally-controlled tumor protein homolog (tpt1), found in Xenopus laevis (African clawed frog).